An 863-amino-acid chain; its full sequence is DNA mismatch repair protein MutS (863 aa).

ATP is bound at residue 607-614; that stretch reads GPNMAGKS.

Belongs to the DNA mismatch repair MutS family.

This protein is involved in the repair of mismatches in DNA. It is possible that it carries out the mismatch recognition step. This protein has a weak ATPase activity. This Caldicellulosiruptor bescii (strain ATCC BAA-1888 / DSM 6725 / KCTC 15123 / Z-1320) (Anaerocellum thermophilum) protein is DNA mismatch repair protein MutS.